Here is a 152-residue protein sequence, read N- to C-terminus: Ribosome maturation factor RimP (152 aa).

This sequence belongs to the RimP family.

It is found in the cytoplasm. Functionally, required for maturation of 30S ribosomal subunits. The chain is Ribosome maturation factor RimP from Alteromonas mediterranea (strain DSM 17117 / CIP 110805 / LMG 28347 / Deep ecotype).